Reading from the N-terminus, the 415-residue chain is Squalene synthase 10 (415 aa).

Helical transmembrane passes span 281 to 301 (AIFRFCAIPQIMAIGTLALCF) and 392 to 412 (LIVILFIILAILYAYLSSNLP).

Belongs to the phytoene/squalene synthase family. Mg(2+) serves as cofactor. Requires Mn(2+) as cofactor.

The protein resides in the endoplasmic reticulum membrane. The enzyme catalyses 2 (2E,6E)-farnesyl diphosphate + NADH + H(+) = squalene + 2 diphosphate + NAD(+). It carries out the reaction 2 (2E,6E)-farnesyl diphosphate + NADPH + H(+) = squalene + 2 diphosphate + NADP(+). It functions in the pathway terpene metabolism; lanosterol biosynthesis; lanosterol from farnesyl diphosphate: step 1/3. Component of the triterpene saponins (e.g. ginsenosides or panaxosides) and phytosterols biosynthetic pathways. Catalyzes the biosynthesis of squalene. The polypeptide is Squalene synthase 10 (Panax ginseng (Korean ginseng)).